The following is a 240-amino-acid chain: Uridylate kinase (240 aa).

Position 13–16 (13–16 (KFSG)) interacts with ATP. Residue G55 participates in UMP binding. ATP is bound by residues G56 and R60. UMP is bound by residues D76 and 137–144 (TGNPFFTT). ATP is bound by residues T164, Y170, and D173.

The protein belongs to the UMP kinase family. In terms of assembly, homohexamer.

Its subcellular location is the cytoplasm. It carries out the reaction UMP + ATP = UDP + ADP. It functions in the pathway pyrimidine metabolism; CTP biosynthesis via de novo pathway; UDP from UMP (UMPK route): step 1/1. With respect to regulation, inhibited by UTP. Functionally, catalyzes the reversible phosphorylation of UMP to UDP. This chain is Uridylate kinase, found in Helicobacter pylori (strain HPAG1).